Consider the following 102-residue polypeptide: Small ribosomal subunit protein uS10 (102 aa).

This sequence belongs to the universal ribosomal protein uS10 family. In terms of assembly, part of the 30S ribosomal subunit.

In terms of biological role, involved in the binding of tRNA to the ribosomes. In Streptococcus suis (strain 98HAH33), this protein is Small ribosomal subunit protein uS10.